A 288-amino-acid polypeptide reads, in one-letter code: Phospholipid phosphatase 2 (288 aa).

The Cytoplasmic portion of the chain corresponds to 1 to 4 (MQRR). The chain crosses the membrane as a helical span at residues 5–25 (WVFVLLDVLCLLVASLPFAIL). Residues 26–51 (TLVNAPYKRGFYCGDDSIRYPYRPDT) lie on the Lumenal side of the membrane. Residues 52–72 (ITHGLMAGVTITATVILVSAG) traverse the membrane as a helical segment. The Cytoplasmic segment spans residues 73–87 (EAYLVYTDRLYSRSD). The helical transmembrane segment at 88 to 108 (FNNYVAAVYKVLGTFLFGAAV) threads the bilayer. At 109 to 162 (SQSLTDLAKYMIGRLRPNFLAVCDPDWSRVNCSVYVQLEKVCRGNPADVTEARL) the chain is on the lumenal side. The tract at residues 117-125 (KYMIGRLRP) is phosphatase sequence motif I. An N-linked (GlcNAc...) asparagine glycan is attached at Asn-139. The helical transmembrane segment at 163–183 (SFYSGHSSFGMYCMVFLALYV) threads the bilayer. A phosphatase sequence motif II region spans residues 165-168 (YSGH). His-168 functions as the Proton donors in the catalytic mechanism. Over 184–196 (QARLCWKWARLLR) the chain is Cytoplasmic. Residues 197 to 217 (PTVQFFLVAFALYVGYTRVSD) form a helical membrane-spanning segment. The interval 213–224 (TRVSDYKHHWSD) is phosphatase sequence motif III. At 218–226 (YKHHWSDVL) the chain is on the lumenal side. His-220 serves as the catalytic Nucleophile. Residues 227 to 247 (VGLLQGALVAALTVCYISDFF) traverse the membrane as a helical segment. At 248 to 288 (KARPPQHCLKEEELERKPSLSLTLTLGEADHNHYGYPHSSS) the chain is on the cytoplasmic side.

Belongs to the PA-phosphatase related phosphoesterase family. Forms functional homodimers and homooligomers. Can also form heterooligomers with PLPP1 and PLPP3. In terms of processing, N-glycosylated. Found mainly in brain, pancreas and placenta.

The protein resides in the membrane. It localises to the cell membrane. The protein localises to the early endosome membrane. Its subcellular location is the endoplasmic reticulum membrane. It catalyses the reaction a 1,2-diacyl-sn-glycero-3-phosphate + H2O = a 1,2-diacyl-sn-glycerol + phosphate. The catalysed reaction is 1,2-dihexadecanoyl-sn-glycero-3-phosphate + H2O = 1,2-dihexadecanoyl-sn-glycerol + phosphate. The enzyme catalyses 1,2-di-(9Z-octadecenoyl)-sn-glycero-3-phosphate + H2O = 1,2-di-(9Z-octadecenoyl)-sn-glycerol + phosphate. It carries out the reaction a monoacyl-sn-glycero-3-phosphate + H2O = a monoacylglycerol + phosphate. It catalyses the reaction (9Z)-octadecenoyl-sn-glycero-3-phosphate + H2O = (9Z-octadecenoyl)-glycerol + phosphate. The catalysed reaction is sphing-4-enine 1-phosphate + H2O = sphing-4-enine + phosphate. The enzyme catalyses an N-acylsphing-4-enine 1-phosphate + H2O = an N-acylsphing-4-enine + phosphate. It carries out the reaction N-(octanoyl)-sphing-4-enine-1-phosphate + H2O = N-octanoylsphing-4-enine + phosphate. It catalyses the reaction N-(9Z-octadecenoyl)-ethanolamine phosphate + H2O = N-(9Z-octadecenoyl) ethanolamine + phosphate. The protein operates within lipid metabolism; phospholipid metabolism. Magnesium-independent phospholipid phosphatase. Insensitive to N-ethylmaleimide. Inhibited by sphingosine, zinc ions and modestly by propanolol. In terms of biological role, magnesium-independent phospholipid phosphatase that catalyzes the dephosphorylation of a variety of glycerolipid and sphingolipid phosphate esters including phosphatidate/PA, lysophosphatidate/LPA, sphingosine 1-phosphate/S1P and ceramide 1-phosphate/C1P. Has no apparent extracellular phosphatase activity and therefore most probably acts intracellularly. Also acts on N-oleoyl ethanolamine phosphate/N-(9Z-octadecenoyl)-ethanolamine phosphate, a potential physiological compound. Through dephosphorylation of these bioactive lipid mediators produces new bioactive compounds and may regulate signal transduction in different cellular processes. Indirectly regulates, for instance, cell cycle G1/S phase transition through its phospholipid phosphatase activity. The sequence is that of Phospholipid phosphatase 2 from Homo sapiens (Human).